Here is a 35-residue protein sequence, read N- to C-terminus: uncharacterized protein (35 aa).

Positions 1 to 27 (MDQNEANIYNENNENNENNENENCQNE) are enriched in low complexity. Residues 1–35 (MDQNEANIYNENNENNENNENENCQNEPIRIKIII) are disordered.

This is an uncharacterized protein from Dictyostelium discoideum (Social amoeba).